Reading from the N-terminus, the 168-residue chain is Endoribonuclease YbeY (168 aa).

Positions 123, 127, and 133 each coordinate Zn(2+).

It belongs to the endoribonuclease YbeY family. The cofactor is Zn(2+).

The protein resides in the cytoplasm. In terms of biological role, single strand-specific metallo-endoribonuclease involved in late-stage 70S ribosome quality control and in maturation of the 3' terminus of the 16S rRNA. This chain is Endoribonuclease YbeY, found in Francisella tularensis subsp. tularensis (strain SCHU S4 / Schu 4).